The chain runs to 181 residues: Dual-action ribosomal maturation protein DarP (181 aa).

Positions 1–24 are disordered; the sequence is MTGIKRPMSQYQDDNEWEDWGPSK.

It belongs to the DarP family.

Its subcellular location is the cytoplasm. Functionally, member of a network of 50S ribosomal subunit biogenesis factors which assembles along the 30S-50S interface, preventing incorrect 23S rRNA structures from forming. Promotes peptidyl transferase center (PTC) maturation. This chain is Dual-action ribosomal maturation protein DarP, found in Aeromonas hydrophila subsp. hydrophila (strain ATCC 7966 / DSM 30187 / BCRC 13018 / CCUG 14551 / JCM 1027 / KCTC 2358 / NCIMB 9240 / NCTC 8049).